The primary structure comprises 658 residues: Probable replication factor A 73 kDa subunit (658 aa).

Disordered regions lie at residues 134-155 and 169-222; these read PEVK…RPNI and SEFQ…TERG. The segment at residues 236–326 is a DNA-binding region (OB); that stretch reads FRIHGMVSRK…TLRNDSVVEA (91 aa). The C4-type zinc finger occupies 518–539; it reads CASEGCQKKVIESDGEYRCEKC.

The protein belongs to the replication factor A protein 1 family. In terms of assembly, component of the heterotrimeric canonical replication protein A complex (RPA).

It localises to the nucleus. In terms of biological role, as part of the heterotrimeric replication protein A complex (RPA/RP-A), binds and stabilizes single-stranded DNA intermediates, that form during DNA replication or upon DNA stress. It prevents their reannealing and in parallel, recruits and activates different proteins and complexes involved in DNA metabolism. Thereby, it plays an essential role both in DNA replication and the cellular response to DNA damage. This chain is Probable replication factor A 73 kDa subunit, found in Caenorhabditis briggsae.